Consider the following 248-residue polypeptide: Mannose-binding protein C (248 aa).

A signal peptide spans 1-20; the sequence is MSLFPSLTLLLLSVVATSYS. Positions 42 to 99 constitute a Collagen-like domain; it reads GINGFPGKDGRDGTKGEKGEPGQGLRGLQGPPGKLGPPGNPGSSGSPGPKGQKGDPGE. Residues 43 to 113 are disordered; the sequence is INGFPGKDGR…DSSLAASERK (71 aa). Proline 47 is modified (4-hydroxyproline). The span at 49-61 shows a compositional bias: basic and acidic residues; that stretch reads KDGRDGTKGEKGE. Proline 73, proline 79, proline 82, and proline 88 each carry 4-hydroxyproline. Low complexity predominate over residues 82–91; it reads PGSSGSPGPK. A coiled-coil region spans residues 112–130; it reads RKALQTEMARIKKWLTFSL. Residues 134–245 enclose the C-type lectin domain; sequence VGNKFFLTNG…CSSSHLALCE (112 aa). 2 disulfide bridges follow: cysteine 155–cysteine 244 and cysteine 222–cysteine 236.

In terms of assembly, oligomeric complex of 3 or more homotrimers. Interacts with MASP1 and MASP2. Interacts with MEP1A and MEP1B and may inhibit their catalytic activity. In terms of processing, hydroxylation on proline residues within the sequence motif, GXPG, is most likely to be 4-hydroxy as this fits the requirement for 4-hydroxylation in vertebrates.

The protein resides in the secreted. Functionally, calcium-dependent lectin involved in innate immune defense. Binds mannose, fucose and N-acetylglucosamine on different microorganisms and activates the lectin complement pathway. Binds to late apoptotic cells, as well as to apoptotic blebs and to necrotic cells, but not to early apoptotic cells, facilitating their uptake by macrophages. The protein is Mannose-binding protein C (MBL2) of Chlorocebus aethiops (Green monkey).